The sequence spans 160 residues: MSVTKKPDLTDPVLRAKLAKGMGHNYYGEPAWPNDLLYMFPVVILGTLSCITGLAVLDPAAIGEPANPFATPLEILPEWYFFPVFQLLRTVPNKLLGVLLMAAVPAGLLTVPFIESINKFQNPFRRPVATTVFLIGTVVAIWLGIGATLPIDISLTLGLF.

3 helical membrane passes run 36-56 (LLYMFPVVILGTLSCITGLAV), 95-115 (LLGVLLMAAVPAGLLTVPFIE), and 131-151 (TVFLIGTVVAIWLGIGATLPI).

Belongs to the cytochrome b family. PetD subfamily. The 4 large subunits of the cytochrome b6-f complex are cytochrome b6, subunit IV (17 kDa polypeptide, petD), cytochrome f and the Rieske protein, while the 4 small subunits are petG, petL, petM and petN. The complex functions as a dimer.

Its subcellular location is the plastid. The protein localises to the chloroplast thylakoid membrane. In terms of biological role, component of the cytochrome b6-f complex, which mediates electron transfer between photosystem II (PSII) and photosystem I (PSI), cyclic electron flow around PSI, and state transitions. The sequence is that of Cytochrome b6-f complex subunit 4 from Nephroselmis olivacea (Green alga).